The primary structure comprises 174 residues: UPF0200 protein PAE1629 (174 aa).

9-16 (GLPGSGKT) is a binding site for ATP.

Belongs to the UPF0200 family.

In Pyrobaculum aerophilum (strain ATCC 51768 / DSM 7523 / JCM 9630 / CIP 104966 / NBRC 100827 / IM2), this protein is UPF0200 protein PAE1629.